We begin with the raw amino-acid sequence, 281 residues long: Release factor glutamine methyltransferase (281 aa).

Residues 121 to 125 (GSGTG), D144, and N188 each bind S-adenosyl-L-methionine. 188–191 (NPPY) lines the substrate pocket.

It belongs to the protein N5-glutamine methyltransferase family. PrmC subfamily.

The enzyme catalyses L-glutaminyl-[peptide chain release factor] + S-adenosyl-L-methionine = N(5)-methyl-L-glutaminyl-[peptide chain release factor] + S-adenosyl-L-homocysteine + H(+). Functionally, methylates the class 1 translation termination release factors RF1/PrfA and RF2/PrfB on the glutamine residue of the universally conserved GGQ motif. In Aquifex aeolicus (strain VF5), this protein is Release factor glutamine methyltransferase.